The sequence spans 873 residues: Sine oculis-binding protein homolog (873 aa).

Basic and acidic residues predominate over residues 1–14 (MAEMEKEGRPPENK). The disordered stretch occupies residues 1 to 26 (MAEMEKEGRPPENKRSRKPAHPVKRE). FCS-type zinc fingers lie at residues 142–180 (DDVSNVQIMCAWCQKVGIKRYSLSMGSEVKSFCSEKCFA) and 216–256 (FKNN…KCLN). 3 disordered regions span residues 308 to 339 (RRKAPSPVATAGQSQGPGPSASTTVSPSDTAN), 413 to 484 (RGPP…PGAP), and 550 to 646 (KPPN…PGVL). Residues 318-339 (AGQSQGPGPSASTTVSPSDTAN) show a composition bias toward polar residues. Low complexity predominate over residues 417 to 433 (HHASNPNSPLSNPMLPG). Residues 460-484 (IHPPSTPTMPGNPPGLLPPPPPGAP) show a composition bias toward pro residues. The span at 614–625 (EHGRSEVVDLTR) shows a compositional bias: basic and acidic residues. The short motif at 620–624 (VVDLT) is the SUMO interaction motif 1 (SIM); mediates the binding to polysumoylated substrates element. At Ser629 the chain carries Phosphoserine. An SUMO interaction motif 2 (SIM); mediates the binding to polysumoylated substrates motif is present at residues 653–657 (VIDLT). Residue Lys677 forms a Glycyl lysine isopeptide (Lys-Gly) (interchain with G-Cter in SUMO2) linkage. Ser699 carries the phosphoserine modification. The disordered stretch occupies residues 730–771 (AAAEGAKSAEPPPEQPPPPPPPAPPKKLLSPEEPAVSELESV). A compositionally biased stretch (pro residues) spans 739–754 (EPPPEQPPPPPPPAPP).

This sequence belongs to the SOBP family. In terms of assembly, interacts (via SIM domains) with SUMO1 and SUMO2.

Implicated in development of the cochlea. This is Sine oculis-binding protein homolog from Homo sapiens (Human).